The following is a 615-amino-acid chain: Ras association domain-containing protein 1 homolog (615 aa).

2 disordered regions span residues 1 to 29 and 69 to 89; these read MLRS…PTYQ and SDDE…QSIG. A compositionally biased stretch (low complexity) spans 76 to 87; that stretch reads TSSTSSPQSEQS. Residues 164–214 form a Phorbol-ester/DAG-type zinc finger; sequence NHSFKTHSLLHPTWCDKCGDFIWGILKEALKCEHCNYTCHARCRDLVTLDC. Residues 249-268 are disordered; it reads PAMSSSTGSDKENGNGNSAG. Residues 251–268 are compositionally biased toward polar residues; the sequence is MSSSTGSDKENGNGNSAG. The Ras-associating domain occupies 396 to 496; the sequence is KTTSLRTITS…RALVLQENDT (101 aa). The SARAH domain maps to 498–545; that stretch reads DILWDAFEIPELENFLRILGMEEKQYVFQTQQKYQQYRYHLDAELRQR.

In terms of assembly, interacts with rab-39 (GTP-bound form). Interacts (via SARAH domain) with cst-1; the interaction is required for the phosphorylation of cst-1. In terms of tissue distribution, expressed in the pharynx, epithelial cells, ciliated neurons in the head, body wall muscles, hypodermis, vulva, gonadal sheath cells, tail hypodermis and in coelomocytes. Expressed in the pharynx, neurons and vulva.

It is found in the cytoplasm. The protein resides in the cytoskeleton. In terms of biological role, involved in embryonic morphogenesis. Plays a role in the organization of apical filamentous actin in epithelial cells of the developing embryo. May play a role in let-60-mediated vulval development. May induce nuclear condensation. Positively regulates the oxidative stress response, and this may be in association with the small GTPase rab-39. Not required for muscle integrity. The protein is Ras association domain-containing protein 1 homolog of Caenorhabditis elegans.